The sequence spans 309 residues: Malate dehydrogenase (309 aa).

Residues 9 to 14 and Asp-33 contribute to the NAD(+) site; that span reads GAGFVG. Residues Arg-82 and Arg-88 each coordinate substrate. NAD(+)-binding positions include Asn-95 and 118-120; that span reads VNN. Substrate contacts are provided by Asn-120 and Arg-151. His-175 acts as the Proton acceptor in catalysis.

The protein belongs to the LDH/MDH superfamily. MDH type 3 family.

The catalysed reaction is (S)-malate + NAD(+) = oxaloacetate + NADH + H(+). In terms of biological role, catalyzes the reversible oxidation of malate to oxaloacetate. The protein is Malate dehydrogenase of Roseiflexus sp. (strain RS-1).